The chain runs to 285 residues: Pantothenate synthetase (285 aa).

30-37 (MGFLHEGH) serves as a coordination point for ATP. The active-site Proton donor is His37. Gln61 lines the (R)-pantoate pocket. Residue Gln61 coordinates beta-alanine. Residue 147–150 (GQKD) coordinates ATP. Gln153 provides a ligand contact to (R)-pantoate. ATP contacts are provided by residues Val176 and 184-187 (KSSR).

The protein belongs to the pantothenate synthetase family. As to quaternary structure, homodimer.

The protein localises to the cytoplasm. The enzyme catalyses (R)-pantoate + beta-alanine + ATP = (R)-pantothenate + AMP + diphosphate + H(+). The protein operates within cofactor biosynthesis; (R)-pantothenate biosynthesis; (R)-pantothenate from (R)-pantoate and beta-alanine: step 1/1. Functionally, catalyzes the condensation of pantoate with beta-alanine in an ATP-dependent reaction via a pantoyl-adenylate intermediate. This chain is Pantothenate synthetase, found in Listeria welshimeri serovar 6b (strain ATCC 35897 / DSM 20650 / CCUG 15529 / CIP 8149 / NCTC 11857 / SLCC 5334 / V8).